Here is a 232-residue protein sequence, read N- to C-terminus: Ornithine carbamoyltransferase (232 aa).

Residues Gln-15, Arg-39, and 66–69 contribute to the carbamoyl phosphate site; that span reads HPTQ. Residues Asn-99, Asp-163, and 167-168 contribute to the L-ornithine site; that span reads SM. Carbamoyl phosphate contacts are provided by residues 204 to 207 and Thr-232; that span reads HCLP.

This sequence belongs to the aspartate/ornithine carbamoyltransferase superfamily. OTCase family.

Its subcellular location is the cytoplasm. The catalysed reaction is carbamoyl phosphate + L-ornithine = L-citrulline + phosphate + H(+). It participates in amino-acid biosynthesis; L-arginine biosynthesis; L-arginine from L-ornithine and carbamoyl phosphate: step 1/3. Reversibly catalyzes the transfer of the carbamoyl group from carbamoyl phosphate (CP) to the N(epsilon) atom of ornithine (ORN) to produce L-citrulline. This Neisseria subflava protein is Ornithine carbamoyltransferase (argF).